Reading from the N-terminus, the 177-residue chain is Protein C (177 aa).

The span at 1–10 (MSTKAWNASR) shows a compositional bias: polar residues. Residues 1-37 (MSTKAWNASRLSGPDPSTPWSLKKPLQHGSRPPKGKR) are disordered.

The protein belongs to the morbillivirus protein C family.

This Bos indicus (Zebu) protein is Protein C (P/V/C).